Here is a 185-residue protein sequence, read N- to C-terminus: Large ribosomal subunit protein uL5 (185 aa).

Belongs to the universal ribosomal protein uL5 family. As to quaternary structure, part of the 50S ribosomal subunit; part of the 5S rRNA/L5/L18/L25 subcomplex. Contacts the 5S rRNA and the P site tRNA. Forms a bridge to the 30S subunit in the 70S ribosome.

In terms of biological role, this is one of the proteins that bind and probably mediate the attachment of the 5S RNA into the large ribosomal subunit, where it forms part of the central protuberance. In the 70S ribosome it contacts protein S13 of the 30S subunit (bridge B1b), connecting the 2 subunits; this bridge is implicated in subunit movement. Contacts the P site tRNA; the 5S rRNA and some of its associated proteins might help stabilize positioning of ribosome-bound tRNAs. This Rhizobium rhizogenes (strain K84 / ATCC BAA-868) (Agrobacterium radiobacter) protein is Large ribosomal subunit protein uL5.